The following is a 287-amino-acid chain: Bifunctional protein FolD (287 aa).

NADP(+)-binding positions include 160-162, Ser189, and Thr230; that span reads GRS.

It belongs to the tetrahydrofolate dehydrogenase/cyclohydrolase family. Homodimer.

It catalyses the reaction (6R)-5,10-methylene-5,6,7,8-tetrahydrofolate + NADP(+) = (6R)-5,10-methenyltetrahydrofolate + NADPH. The enzyme catalyses (6R)-5,10-methenyltetrahydrofolate + H2O = (6R)-10-formyltetrahydrofolate + H(+). It participates in one-carbon metabolism; tetrahydrofolate interconversion. Its function is as follows. Catalyzes the oxidation of 5,10-methylenetetrahydrofolate to 5,10-methenyltetrahydrofolate and then the hydrolysis of 5,10-methenyltetrahydrofolate to 10-formyltetrahydrofolate. The chain is Bifunctional protein FolD from Chlamydia abortus (strain DSM 27085 / S26/3) (Chlamydophila abortus).